A 1141-amino-acid chain; its full sequence is cGMP-inhibited 3',5'-cyclic phosphodiesterase 3A (1141 aa).

The tract at residues 1–42 is disordered; sequence MAVPGDAARVRDKPVHSGVSQAPTAGRDCHHRADPASPRDSG. Transmembrane regions (helical) follow at residues 61 to 81, 130 to 150, 160 to 180, 185 to 205, 210 to 230, and 232 to 252; these read LSSALCAGSLSFLLALLVRLV, LQPSALLFSLLCAFFWMGLYL, AVALLAACCGGEALVQIGLGV, LLSLPAAGVVLSCLAAATWLV, LGVLMIALTSAVRTVSLISLE, and FKVAWRPYLAYLAGVLGILLA. Residue Ser312 is modified to Phosphoserine. Phosphoserine; by PKA and PKC is present on residues Ser428 and Ser438. Residues 436 to 448 are compositionally biased toward low complexity; sequence RVSSTWTTTTSAT. The interval 436-482 is disordered; the sequence is RVSSTWTTTTSATGLPTLEPAPVRRDRSTSIKLQEAPSSSPDSWNNP. Over residues 465–482 the composition is skewed to polar residues; sequence SIKLQEAPSSSPDSWNNP. Residues Ser492, Ser520, and Ser524 each carry the phosphoserine modification. Positions 590-640 are disordered; that stretch reads RPYSQGNPADEPLERSGVATRTPSRTDDTAQVTSDYETNNNSDSSDIVQNE. The segment covering 608–637 has biased composition (polar residues); sequence ATRTPSRTDDTAQVTSDYETNNNSDSSDIV. The interval 669-1141 is interaction with SLFN12; the sequence is KPILAPEPLV…EEIPTQKPDQ (473 aa). A PDEase domain is found at 674 to 1093; it reads PEPLVMDNLD…KMWKKVIEEE (420 aa). The Proton donor role is filled by His752. Position 752 (His752) interacts with AMP. His756, His836, Asp837, and Asp950 together coordinate Mn(2+). AMP contacts are provided by Asp837, Asp950, and Gln1001. Asp837 is a Mg(2+) binding site. 2 disordered regions span residues 1023–1062 and 1100–1141; these read PGKWVEDSDESGDTDDPEEEEEEAPAPNEEETCENNESPK and ENQS…KPDQ. Acidic residues predominate over residues 1029-1056; sequence DSDESGDTDDPEEEEEEAPAPNEEETCE. Ser1033 is subject to Phosphoserine. Thr1036 bears the Phosphothreonine mark. Residues 1100 to 1113 are compositionally biased toward polar residues; it reads ENQSLDQTPQSHSS. Residue Lys1120 forms a Glycyl lysine isopeptide (Lys-Gly) (interchain with G-Cter in SUMO2) linkage. Residues 1125 to 1141 show a composition bias toward basic and acidic residues; the sequence is EKGKPRGEEIPTQKPDQ.

The protein belongs to the cyclic nucleotide phosphodiesterase family. PDE3 subfamily. In terms of assembly, homodimer. Interacts with SLFN12; direct low affinity interaction which is stimulated by binding of 17beta-estradiol/E2 to PDE3A and that positively regulates the ribonuclease activity of SLFN12. Requires Mn(2+) as cofactor. Mg(2+) serves as cofactor.

It is found in the membrane. The protein localises to the cytoplasm. Its subcellular location is the cytosol. It catalyses the reaction a nucleoside 3',5'-cyclic phosphate + H2O = a nucleoside 5'-phosphate + H(+). It carries out the reaction 3',5'-cyclic AMP + H2O = AMP + H(+). The catalysed reaction is 3',5'-cyclic GMP + H2O = GMP + H(+). The enzyme catalyses 3',5'-cyclic UMP + H2O = UMP + H(+). Inhibited by cGMP. Inhibited by 17beta-estradiol. Inhibited by milrinone. In terms of biological role, cyclic nucleotide phosphodiesterase with specificity for the second messengers cAMP and cGMP, which are key regulators of many important physiological processes. Also has activity toward cUMP. Independently of its catalytic activity it is part of an E2/17beta-estradiol-induced pro-apoptotic signaling pathway. E2 stabilizes the PDE3A/SLFN12 complex in the cytosol, promoting the dephosphorylation of SLFN12 and activating its pro-apoptotic ribosomal RNA/rRNA ribonuclease activity. This apoptotic pathway might be relevant in tissues with high concentration of E2 and be for instance involved in placenta remodeling. This is cGMP-inhibited 3',5'-cyclic phosphodiesterase 3A from Homo sapiens (Human).